We begin with the raw amino-acid sequence, 233 residues long: 6-carboxyhexanoate--CoA ligase (233 aa).

This sequence belongs to the BioW family. As to quaternary structure, homodimer. Requires Mg(2+) as cofactor.

It catalyses the reaction heptanedioate + ATP + CoA = 6-carboxyhexanoyl-CoA + AMP + diphosphate. It functions in the pathway metabolic intermediate metabolism; pimeloyl-CoA biosynthesis; pimeloyl-CoA from pimelate: step 1/1. In terms of biological role, catalyzes the transformation of pimelate into pimeloyl-CoA with concomitant hydrolysis of ATP to AMP. The chain is 6-carboxyhexanoate--CoA ligase from Methanocaldococcus sp. (strain FS406-22).